Here is a 581-residue protein sequence, read N- to C-terminus: Terpene synthase 2, chloroplastic (581 aa).

Residues 1-34 constitute a chloroplast transit peptide; the sequence is MYSLPGATMSAAPASIISSSSFVEPLLLAAASPA. Residues Arg-299, Asp-336, Asp-340, and Arg-480 each contribute to the substrate site. The Mg(2+) site is built by Asp-336 and Asp-340. Residues 336–340 carry the DDXXD motif motif; that stretch reads DDIFD. Mg(2+) contacts are provided by Asp-483, Ser-487, and Glu-491.

This sequence belongs to the terpene synthase family. Monomer. Requires Mg(2+) as cofactor.

The protein localises to the plastid. Its subcellular location is the chloroplast. The catalysed reaction is (2E,6E)-farnesyl diphosphate + H2O = (3S,6E)-nerolidol + diphosphate. It carries out the reaction (2E,6E,10E)-geranylgeranyl diphosphate + H2O = (6E,10E)-geranyllinalool + diphosphate. The enzyme catalyses (2E)-geranyl diphosphate + H2O = (S)-linalool + diphosphate. It functions in the pathway secondary metabolite biosynthesis; terpenoid biosynthesis. In terms of biological role, involved in sesquiterpene (C15), diterpene (C20) and monoterpene (C10) biosynthesis. Has sesquiterpene synthase activity, converting farnesyl diphosphate to nerolidol, the precursor of the volatile C11-homoterpene (E)-3,8-dimethyl-1,4,7-nonatriene (DMNT). Has diterpene synthase activity, converting geranylgeranyl diphosphate to (E,E)-geranyllinalool, the precursor of the volatile C16-homoterpene (E,E)-4,8,12-trimethyltrideca 1,3,7,11-tetraene (TMTT). Has monoterpene synthase activity, converting geranyl diphosphate into linalool. Forms only the S-isomers of the three tertiary terpene alcohols. This Zea mays (Maize) protein is Terpene synthase 2, chloroplastic.